The following is a 285-amino-acid chain: Methyl-CpG-binding domain protein 3 (285 aa).

In terms of domain architecture, MBD spans 1 to 69; that stretch reads MERKRWECPA…STFDFRTGKM (69 aa). At S56 the chain carries Phosphoserine. A Glycyl lysine isopeptide (Lys-Gly) (interchain with G-Cter in SUMO2) cross-link involves residue K73. S85 is modified (phosphoserine). Glycyl lysine isopeptide (Lys-Gly) (interchain with G-Cter in SUMO2) cross-links involve residues K90 and K92. S144 is subject to Phosphoserine. Residues 221 to 279 adopt a coiled-coil conformation; it reads TDDDIRKQEELVQQVRKRLEEALMADMLAHVEELARDGEAPLDKACAEEEEEEEEEEEE. Over residues 255–267 the composition is skewed to basic and acidic residues; sequence ARDGEAPLDKACA. Positions 255–285 are disordered; sequence ARDGEAPLDKACAEEEEEEEEEEEEPEPERV. The span at 268–285 shows a compositional bias: acidic residues; the sequence is EEEEEEEEEEEEPEPERV.

In terms of assembly, heterodimer (via N-terminus) with MBD2. Component of the MeCP1 histone deacetylase complex. Component of the nucleosome remodeling and deacetylase (NuRD) repressor complex, composed of core proteins MTA1, MTA2, MTA3, RBBP4, RBBP7, HDAC1, HDAC2, MBD2, MBD3, and peripherally associated proteins CDK2AP1, CDK2AP2, GATAD2A, GATAD2B, CHD3, CHD4 and CHD5. The exact stoichiometry of the NuRD complex is unknown, and some subunits such as MBD2 and MBD3, GATAD2A and GATAD2B, and CHD3, CHD4 and CHD5 define mutually exclusive NuRD complexes. Interacts with MBD3L2 (via N-terminus); the interaction is direct. Interacts with BCL6. Interacts with CDK2AP1. Interacts with HDAC1. Interacts with MTA2. Interacts with DNMT1. Interacts with GATAD2A. Interacts with GATAD2B. Does not interact with PWWP2A. Does not interact with PWWP2B. Highly expressed in brain, heart, kidney, liver, lung, skeletal muscle, spleen and testis. Detected at lower levels in embryonic stem cells.

It is found in the nucleus. The protein resides in the chromosome. Its function is as follows. Acts as a component of the histone deacetylase NuRD complex which participates in the remodeling of chromatin. Acts as transcriptional repressor and plays a role in gene silencing. Does not bind methylated DNA by itself. Binds to a lesser degree DNA containing unmethylated CpG dinucleotides. Recruits histone deacetylases and DNA methyltransferases. This is Methyl-CpG-binding domain protein 3 (Mbd3) from Mus musculus (Mouse).